A 508-amino-acid polypeptide reads, in one-letter code: Hydroxymethylglutaryl-CoA synthase, mitochondrial (508 aa).

A mitochondrion-targeting transit peptide spans 1–37 (MQRLLTPVRQVLQVKRVMQEASLLPARLLPAAHPSFS). Residue Lys52 is modified to N6-succinyllysine. (3S)-3-hydroxy-3-methylglutaryl-CoA is bound by residues Glu80 and Ala81. Glu132 (proton donor/acceptor) is an active-site residue. Residues Cys166, Asn204, and Thr208 each coordinate (3S)-3-hydroxy-3-methylglutaryl-CoA. Cys166 functions as the Acyl-thioester intermediate in the catalytic mechanism. Lys243 is modified (N6-acetyllysine). Lys256 is subject to N6-acetyllysine; alternate. Position 256 is an N6-succinyllysine; alternate (Lys256). Positions 258 and 301 each coordinate (3S)-3-hydroxy-3-methylglutaryl-CoA. The active-site Proton donor/acceptor is His301. At Lys306 the chain carries N6-acetyllysine. A (3S)-3-hydroxy-3-methylglutaryl-CoA-binding site is contributed by Lys310. An N6-acetyllysine; alternate modification is found at Lys310. Lys310 carries the N6-succinyllysine; alternate modification. An N6-succinyllysine modification is found at Lys333. N6-acetyllysine; alternate occurs at positions 342, 350, 354, and 358. 4 positions are modified to N6-succinyllysine; alternate: Lys342, Lys350, Lys354, and Lys358. (3S)-3-hydroxy-3-methylglutaryl-CoA-binding residues include Asn380 and Ser414. Ser433 is modified (phosphoserine). Position 437 is an N6-acetyllysine (Lys437). Ser440 is modified (phosphoserine). At Lys447 the chain carries N6-acetyllysine; alternate. Lys447 is subject to N6-succinyllysine; alternate. Residue Ser456 is modified to Phosphoserine. The residue at position 473 (Lys473) is an N6-acetyllysine; alternate. Residue Lys473 is modified to N6-succinyllysine; alternate. The residue at position 477 (Ser477) is a Phosphoserine.

This sequence belongs to the thiolase-like superfamily. HMG-CoA synthase family. Homodimer. Post-translationally, succinylated. Desuccinylated by SIRT5. Succinylation, at least at Lys-310, inhibits the enzymatic activity.

It is found in the mitochondrion. It carries out the reaction acetoacetyl-CoA + acetyl-CoA + H2O = (3S)-3-hydroxy-3-methylglutaryl-CoA + CoA + H(+). The protein operates within metabolic intermediate biosynthesis; (R)-mevalonate biosynthesis; (R)-mevalonate from acetyl-CoA: step 2/3. Catalyzes the first irreversible step in ketogenesis, condensing acetyl-CoA to acetoacetyl-CoA to form HMG-CoA, which is converted by HMG-CoA reductase (HMGCR) into mevalonate. The chain is Hydroxymethylglutaryl-CoA synthase, mitochondrial (HMGCS2) from Bos taurus (Bovine).